A 318-amino-acid polypeptide reads, in one-letter code: Ribose-phosphate pyrophosphokinase (318 aa).

ATP-binding positions include 40-42 and 99-100; these read DGE and RQ. The Mg(2+) site is built by His134 and Asp173. Residue Lys196 is part of the active site. D-ribose 5-phosphate contacts are provided by residues Arg198, Asp222, and 226-230; that span reads DTAGT.

Belongs to the ribose-phosphate pyrophosphokinase family. Class I subfamily. In terms of assembly, homohexamer. The cofactor is Mg(2+).

It is found in the cytoplasm. It catalyses the reaction D-ribose 5-phosphate + ATP = 5-phospho-alpha-D-ribose 1-diphosphate + AMP + H(+). It functions in the pathway metabolic intermediate biosynthesis; 5-phospho-alpha-D-ribose 1-diphosphate biosynthesis; 5-phospho-alpha-D-ribose 1-diphosphate from D-ribose 5-phosphate (route I): step 1/1. Functionally, involved in the biosynthesis of the central metabolite phospho-alpha-D-ribosyl-1-pyrophosphate (PRPP) via the transfer of pyrophosphoryl group from ATP to 1-hydroxyl of ribose-5-phosphate (Rib-5-P). This is Ribose-phosphate pyrophosphokinase from Burkholderia pseudomallei (strain K96243).